The chain runs to 250 residues: AA9 family lytic polysaccharide monooxygenase AA17 (250 aa).

Positions methionine 1–glycine 21 are cleaved as a signal peptide. Residues histidine 22 and histidine 107 each contribute to the Cu(2+) site. 2 cysteine pairs are disulfide-bonded: cysteine 77–cysteine 199 and cysteine 118–cysteine 122. Asparagine 159 carries N-linked (GlcNAc...) asparagine glycosylation. 2 residues coordinate O2: histidine 185 and glutamine 194. Cu(2+) is bound at residue tyrosine 196.

This sequence belongs to the polysaccharide monooxygenase AA9 family. The cofactor is Cu(2+).

It localises to the secreted. Functionally, lytic polysaccharide monooxygenase (LPMO) that exhibits oxidative cleavage beta-O-4 linkage of lignin resulting in the formation of aromatic compound guaiacol. Catalysis by LPMOs requires the reduction of the active-site copper from Cu(II) to Cu(I) by a reducing agent and H(2)O(2) or O(2) as a cosubstrate. Does not use cellulose, cello-oligosaccharides, xyloglucan, xylan, chitin nor starch as substrates. Able to depolymerize the lignin dimer guaicyl glycerol beta-guaicyl ether (GGE). The chain is AA9 family lytic polysaccharide monooxygenase AA17 from Aspergillus oryzae (strain ATCC 42149 / RIB 40) (Yellow koji mold).